The chain runs to 64 residues: UPF0337 protein SAB0772 (64 aa).

The segment at 1–40 is disordered; sequence MADESKFEQAKGNVKETIGNVTDNKNLENEGKEDKASGKA. Residues 25-40 show a composition bias toward basic and acidic residues; the sequence is KNLENEGKEDKASGKA.

The protein belongs to the UPF0337 (CsbD) family.

This Staphylococcus aureus (strain bovine RF122 / ET3-1) protein is UPF0337 protein SAB0772.